Here is a 169-residue protein sequence, read N- to C-terminus: Lutropin/choriogonadotropin subunit beta (169 aa).

The N-terminal stretch at 1 to 20 (MEMLQGLLLWMLLSVGGVWA) is a signal peptide. Disulfide bonds link cysteine 29–cysteine 77, cysteine 43–cysteine 92, cysteine 46–cysteine 130, cysteine 54–cysteine 108, cysteine 58–cysteine 110, and cysteine 113–cysteine 120. A glycan (N-linked (GlcNAc...) asparagine) is linked at asparagine 33. A disordered region spans residues 131–169 (APQASSSSKDPPSQPLTSTSTPTPGASNRSSHPLPIKTS). A compositionally biased stretch (low complexity) spans 145-154 (PLTSTSTPTP). Over residues 155 to 169 (GASNRSSHPLPIKTS) the composition is skewed to polar residues. The N-linked (GlcNAc...) asparagine glycan is linked to asparagine 158.

Belongs to the glycoprotein hormones subunit beta family. In terms of assembly, heterodimer of a common alpha chain and a unique beta chain which confers biological specificity to thyrotropin, lutropin, follitropin and gonadotropin.

It is found in the secreted. Promotes spermatogenesis and ovulation by stimulating the testes and ovaries to synthesize steroids. This is Lutropin/choriogonadotropin subunit beta (LHB) from Equus quagga burchellii (Burchell's zebra).